Reading from the N-terminus, the 266-residue chain is Hydroxyethylthiazole kinase (266 aa).

Substrate is bound at residue M45. ATP-binding residues include K121 and S167. G194 is a binding site for substrate.

The protein belongs to the Thz kinase family. Mg(2+) is required as a cofactor.

The enzyme catalyses 5-(2-hydroxyethyl)-4-methylthiazole + ATP = 4-methyl-5-(2-phosphooxyethyl)-thiazole + ADP + H(+). Its pathway is cofactor biosynthesis; thiamine diphosphate biosynthesis; 4-methyl-5-(2-phosphoethyl)-thiazole from 5-(2-hydroxyethyl)-4-methylthiazole: step 1/1. Catalyzes the phosphorylation of the hydroxyl group of 4-methyl-5-beta-hydroxyethylthiazole (THZ). The chain is Hydroxyethylthiazole kinase from Methanocella arvoryzae (strain DSM 22066 / NBRC 105507 / MRE50).